Consider the following 811-residue polypeptide: Glycerol-3-phosphate acyltransferase (811 aa).

Positions 309–314 (HRSHMD) match the HXXXXD motif motif.

This sequence belongs to the GPAT/DAPAT family.

The protein localises to the cell inner membrane. It carries out the reaction sn-glycerol 3-phosphate + an acyl-CoA = a 1-acyl-sn-glycero-3-phosphate + CoA. It functions in the pathway phospholipid metabolism; CDP-diacylglycerol biosynthesis; CDP-diacylglycerol from sn-glycerol 3-phosphate: step 1/3. The chain is Glycerol-3-phosphate acyltransferase (plsB) from Vibrio cholerae serotype O1 (strain ATCC 39315 / El Tor Inaba N16961).